We begin with the raw amino-acid sequence, 155 residues long: Protein FAM162A (155 aa).

Positions 77–103 (RFKKEEEIPETISFEMLDAAKNKLRVK) are required for proapoptotic activity. Residues 104 to 121 (VSYLMIALTVAGCIYMVI) traverse the membrane as a helical segment.

This sequence belongs to the UPF0389 family. In terms of assembly, interacts with HSP90AB1; HSP90AB1 is essential for FAM162A mitochondrial localization and pro-apoptotic activity. Interacts with VDAC2; the interaction is probably involved in inducing mitochondrial permeability transition.

The protein resides in the mitochondrion membrane. In terms of biological role, proposed to be involved in regulation of apoptosis; the exact mechanism may differ between cell types/tissues. May be involved in hypoxia-induced cell death of transformed cells implicating cytochrome C release and caspase activation (such as CASP9) and inducing mitochondrial permeability transition. May be involved in hypoxia-induced cell death of neuronal cells probably by promoting release of AIFM1 from mitochondria to cytoplasm and its translocation to the nucleus; however, the involvement of caspases has been reported conflictingly. The sequence is that of Protein FAM162A (Fam162a) from Mus musculus (Mouse).